We begin with the raw amino-acid sequence, 311 residues long: Methionyl-tRNA formyltransferase (311 aa).

Residue 109 to 112 (SLLP) coordinates (6S)-5,6,7,8-tetrahydrofolate.

It belongs to the Fmt family.

The catalysed reaction is L-methionyl-tRNA(fMet) + (6R)-10-formyltetrahydrofolate = N-formyl-L-methionyl-tRNA(fMet) + (6S)-5,6,7,8-tetrahydrofolate + H(+). Functionally, attaches a formyl group to the free amino group of methionyl-tRNA(fMet). The formyl group appears to play a dual role in the initiator identity of N-formylmethionyl-tRNA by promoting its recognition by IF2 and preventing the misappropriation of this tRNA by the elongation apparatus. This Moorella thermoacetica (strain ATCC 39073 / JCM 9320) protein is Methionyl-tRNA formyltransferase.